Consider the following 613-residue polypeptide: Dihydroxy-acid dehydratase (613 aa).

Asp81 is a binding site for Mg(2+). Residue Cys122 participates in [2Fe-2S] cluster binding. Residues Asp123 and Lys124 each coordinate Mg(2+). N6-carboxylysine is present on Lys124. Cys193 contributes to the [2Fe-2S] cluster binding site. Glu489 serves as a coordination point for Mg(2+). Ser515 serves as the catalytic Proton acceptor.

Belongs to the IlvD/Edd family. Homodimer. It depends on [2Fe-2S] cluster as a cofactor. Mg(2+) is required as a cofactor.

It catalyses the reaction (2R)-2,3-dihydroxy-3-methylbutanoate = 3-methyl-2-oxobutanoate + H2O. The catalysed reaction is (2R,3R)-2,3-dihydroxy-3-methylpentanoate = (S)-3-methyl-2-oxopentanoate + H2O. It functions in the pathway amino-acid biosynthesis; L-isoleucine biosynthesis; L-isoleucine from 2-oxobutanoate: step 3/4. It participates in amino-acid biosynthesis; L-valine biosynthesis; L-valine from pyruvate: step 3/4. Functions in the biosynthesis of branched-chain amino acids. Catalyzes the dehydration of (2R,3R)-2,3-dihydroxy-3-methylpentanoate (2,3-dihydroxy-3-methylvalerate) into 2-oxo-3-methylpentanoate (2-oxo-3-methylvalerate) and of (2R)-2,3-dihydroxy-3-methylbutanoate (2,3-dihydroxyisovalerate) into 2-oxo-3-methylbutanoate (2-oxoisovalerate), the penultimate precursor to L-isoleucine and L-valine, respectively. This is Dihydroxy-acid dehydratase from Pseudomonas putida (strain ATCC 47054 / DSM 6125 / CFBP 8728 / NCIMB 11950 / KT2440).